Here is a 60-residue protein sequence, read N- to C-terminus: Short neurotoxin 1 (60 aa).

4 cysteine pairs are disulfide-bonded: Cys-3-Cys-22, Cys-17-Cys-39, Cys-41-Cys-52, and Cys-53-Cys-58.

This sequence belongs to the three-finger toxin family. Short-chain subfamily. Type I alpha-neurotoxin sub-subfamily. In terms of tissue distribution, expressed by the venom gland.

Its subcellular location is the secreted. Binds to muscle nicotinic acetylcholine receptor (nAChR) and inhibit acetylcholine from binding to the receptor, thereby impairing neuromuscular transmission. In Hydrophis ornatus (Ornate reef seasnake), this protein is Short neurotoxin 1.